Consider the following 104-residue polypeptide: Large ribosomal subunit protein uL24 (104 aa).

This sequence belongs to the universal ribosomal protein uL24 family. As to quaternary structure, part of the 50S ribosomal subunit.

Functionally, one of two assembly initiator proteins, it binds directly to the 5'-end of the 23S rRNA, where it nucleates assembly of the 50S subunit. In terms of biological role, one of the proteins that surrounds the polypeptide exit tunnel on the outside of the subunit. This Erwinia tasmaniensis (strain DSM 17950 / CFBP 7177 / CIP 109463 / NCPPB 4357 / Et1/99) protein is Large ribosomal subunit protein uL24.